The following is a 235-amino-acid chain: Ribonuclease 3 (235 aa).

Residues I6–G131 form the RNase III domain. E44 lines the Mg(2+) pocket. The active site involves D48. Residues D117 and E120 each coordinate Mg(2+). Residue E120 is part of the active site. Residues D156 to I225 enclose the DRBM domain.

Belongs to the ribonuclease III family. Homodimer. The cofactor is Mg(2+).

Its subcellular location is the cytoplasm. It carries out the reaction Endonucleolytic cleavage to 5'-phosphomonoester.. In terms of biological role, digests double-stranded RNA. Involved in the processing of primary rRNA transcript to yield the immediate precursors to the large and small rRNAs (23S and 16S). Processes some mRNAs, and tRNAs when they are encoded in the rRNA operon. Processes pre-crRNA and tracrRNA of type II CRISPR loci if present in the organism. This is Ribonuclease 3 from Bartonella henselae (strain ATCC 49882 / DSM 28221 / CCUG 30454 / Houston 1) (Rochalimaea henselae).